Consider the following 285-residue polypeptide: Probable endonuclease 4 (285 aa).

Zn(2+) contacts are provided by His67, His107, Glu144, Asp178, His181, His215, Asp228, His230, and Glu260.

It belongs to the AP endonuclease 2 family. The cofactor is Zn(2+).

It catalyses the reaction Endonucleolytic cleavage to 5'-phosphooligonucleotide end-products.. Endonuclease IV plays a role in DNA repair. It cleaves phosphodiester bonds at apurinic or apyrimidinic (AP) sites, generating a 3'-hydroxyl group and a 5'-terminal sugar phosphate. This Chloroflexus aurantiacus (strain ATCC 29366 / DSM 635 / J-10-fl) protein is Probable endonuclease 4.